Consider the following 161-residue polypeptide: Large ribosomal subunit protein uL11 (161 aa).

The protein belongs to the universal ribosomal protein uL11 family. As to quaternary structure, part of the ribosomal stalk of the 50S ribosomal subunit. Interacts with L10 and the large rRNA to form the base of the stalk. L10 forms an elongated spine to which L12 dimers bind in a sequential fashion forming a multimeric L10(L12)X complex.

Functionally, forms part of the ribosomal stalk which helps the ribosome interact with GTP-bound translation factors. The polypeptide is Large ribosomal subunit protein uL11 (Methanosarcina barkeri (strain Fusaro / DSM 804)).